Reading from the N-terminus, the 152-residue chain is Phosphoribosyl-AMP cyclohydrolase (152 aa).

D92 lines the Mg(2+) pocket. A Zn(2+)-binding site is contributed by C93. Mg(2+) is bound by residues D94 and D96. Zn(2+) is bound by residues C111 and C118.

This sequence belongs to the PRA-CH family. As to quaternary structure, homodimer. Mg(2+) serves as cofactor. Zn(2+) is required as a cofactor.

It is found in the cytoplasm. It catalyses the reaction 1-(5-phospho-beta-D-ribosyl)-5'-AMP + H2O = 1-(5-phospho-beta-D-ribosyl)-5-[(5-phospho-beta-D-ribosylamino)methylideneamino]imidazole-4-carboxamide. Its pathway is amino-acid biosynthesis; L-histidine biosynthesis; L-histidine from 5-phospho-alpha-D-ribose 1-diphosphate: step 3/9. In terms of biological role, catalyzes the hydrolysis of the adenine ring of phosphoribosyl-AMP. This chain is Phosphoribosyl-AMP cyclohydrolase, found in Sinorhizobium fredii (strain NBRC 101917 / NGR234).